Here is a 333-residue protein sequence, read N- to C-terminus: T-cell surface glycoprotein CD1b-2 (333 aa).

An N-terminal signal peptide occupies residues 1-20 (MLLLPLLLLGVILPGGDNED). The Extracellular segment spans residues 21–302 (VFQGPTSFHL…LYWGHPTSIG (282 aa)). Residues Asn-38, Asn-75, and Asn-146 are each glycosylated (N-linked (GlcNAc...) asparagine). Intrachain disulfides connect Cys-120–Cys-184, Cys-149–Cys-163, and Cys-224–Cys-279. The region spanning 185 to 295 (PRYLLGVLDA…LGDQDIILYW (111 aa)) is the Ig-like domain. Residues 303–323 (LILVAIIVPSLILSICLALWF) traverse the membrane as a helical segment. Residues 324 to 333 (WRRWSYQNIL) lie on the Cytoplasmic side of the membrane. The short motif at 329-332 (YQNI) is the Internalization signal element.

As to quaternary structure, heterodimer with B2M (beta-2-microglobulin). Interacts with saposin C.

The protein localises to the cell membrane. Its subcellular location is the endosome membrane. It is found in the lysosome membrane. Functionally, antigen-presenting protein that binds self and non-self lipid and glycolipid antigens and presents them to T-cell receptors on natural killer T-cells. The polypeptide is T-cell surface glycoprotein CD1b-2 (Ovis aries (Sheep)).